We begin with the raw amino-acid sequence, 362 residues long: Chorismate synthase (362 aa).

R47 lines the NADP(+) pocket. Residues 124-126 (RSS), G286, 301-305 (KPTAT), and R327 contribute to the FMN site.

The protein belongs to the chorismate synthase family. Homotetramer. It depends on FMNH2 as a cofactor.

The catalysed reaction is 5-O-(1-carboxyvinyl)-3-phosphoshikimate = chorismate + phosphate. Its pathway is metabolic intermediate biosynthesis; chorismate biosynthesis; chorismate from D-erythrose 4-phosphate and phosphoenolpyruvate: step 7/7. Its function is as follows. Catalyzes the anti-1,4-elimination of the C-3 phosphate and the C-6 proR hydrogen from 5-enolpyruvylshikimate-3-phosphate (EPSP) to yield chorismate, which is the branch point compound that serves as the starting substrate for the three terminal pathways of aromatic amino acid biosynthesis. This reaction introduces a second double bond into the aromatic ring system. The protein is Chorismate synthase of Rippkaea orientalis (strain PCC 8801 / RF-1) (Cyanothece sp. (strain PCC 8801)).